Here is a 282-residue protein sequence, read N- to C-terminus: Protein Ku (282 aa).

The region spanning 9–189 (VNFGLVNVPV…KPELSEAELK (181 aa)) is the Ku domain.

In terms of assembly, homodimer. Interacts with host LigD, maybe via the LigD Pol domain.

Required for replication of viruses with short cos ends (4 bases). Stimulates dsDNA end-joining by host LigD; in conjunction with M.smegmatis or M.tuberculosis LigD can reconstitute NHEJ in S.cerevisiae. Binds dsDNA with either blunt, 5'- or 3-overhangs, protecting it from host exonuclease degradation. This Mycobacterium phage Omega (Mycobacteriophage Omega) protein is Protein Ku (206).